A 225-amino-acid chain; its full sequence is UPF0758 protein SEQ_1136 (225 aa).

Residues Pro102–Leu224 form the MPN domain. Zn(2+) is bound by residues His173, His175, and Asp186. The short motif at His173–Asp186 is the JAMM motif element.

Belongs to the UPF0758 family.

The protein is UPF0758 protein SEQ_1136 of Streptococcus equi subsp. equi (strain 4047).